A 620-amino-acid chain; its full sequence is 1-deoxy-D-xylulose-5-phosphate synthase (620 aa).

Residues H80 and G121 to S123 contribute to the thiamine diphosphate site. D152 serves as a coordination point for Mg(2+). Residues G153–A154, N181, Y288, and E370 contribute to the thiamine diphosphate site. N181 contributes to the Mg(2+) binding site.

The protein belongs to the transketolase family. DXPS subfamily. Homodimer. Requires Mg(2+) as cofactor. Thiamine diphosphate serves as cofactor.

The enzyme catalyses D-glyceraldehyde 3-phosphate + pyruvate + H(+) = 1-deoxy-D-xylulose 5-phosphate + CO2. It functions in the pathway metabolic intermediate biosynthesis; 1-deoxy-D-xylulose 5-phosphate biosynthesis; 1-deoxy-D-xylulose 5-phosphate from D-glyceraldehyde 3-phosphate and pyruvate: step 1/1. Its function is as follows. Catalyzes the acyloin condensation reaction between C atoms 2 and 3 of pyruvate and glyceraldehyde 3-phosphate to yield 1-deoxy-D-xylulose-5-phosphate (DXP). The protein is 1-deoxy-D-xylulose-5-phosphate synthase of Escherichia coli (strain K12 / MC4100 / BW2952).